Here is a 138-residue protein sequence, read N- to C-terminus: Large ribosomal subunit protein uL16 (138 aa).

The segment covering 1 to 15 (MLSPKKVKYRKKQRG) has biased composition (basic residues). The interval 1 to 21 (MLSPKKVKYRKKQRGRLSGEA) is disordered.

Belongs to the universal ribosomal protein uL16 family. As to quaternary structure, part of the 50S ribosomal subunit.

Its function is as follows. Binds 23S rRNA and is also seen to make contacts with the A and possibly P site tRNAs. This is Large ribosomal subunit protein uL16 from Borreliella burgdorferi (strain ATCC 35210 / DSM 4680 / CIP 102532 / B31) (Borrelia burgdorferi).